We begin with the raw amino-acid sequence, 1474 residues long: Alpha-2-macroglobulin-P (1474 aa).

A signal peptide spans 1–32 (MGKRWLPSLALLPLPPPLLLLLLLLLPTNASA). A disulfide bridge connects residues Cys55 and Cys93. 3 N-linked (GlcNAc...) asparagine glycosylation sites follow: Asn62, Asn77, and Asn253. 2 disulfide bridges follow: Cys257–Cys305 and Cys275–Cys293. Asn402 carries an N-linked (GlcNAc...) asparagine glycan. 3 disulfide bridges follow: Cys476–Cys569, Cys601–Cys771, and Cys650–Cys697. Positions 623–752 (LVYDLLPVKD…LVIVDSTGVA (130 aa)) are bait region. N-linked (GlcNAc...) asparagine glycans are attached at residues Asn654 and Asn774. 5 disulfide bridges follow: Cys821–Cys849, Cys847–Cys883, Cys921–Cys1321, Cys1079–Cys1127, and Cys1352–Cys1467. A glycan (N-linked (GlcNAc...) asparagine) is linked at Asn869. Positions 972–975 (CGEQ) form a cross-link, isoglutamyl cysteine thioester (Cys-Gln). N-linked (GlcNAc...) asparagine glycosylation occurs at Asn991. Asn1366 is a glycosylation site (N-linked (GlcNAc...) asparagine).

The protein belongs to the protease inhibitor I39 (alpha-2-macroglobulin) family. In terms of assembly, homotetramer; disulfide-linked. Expressed in uterus, mesometrial lymphoid aggregate and mammary tissue during pregnancy. Expressed in ovary, testis and kidney. Low level expression in heart. Not expressed in liver.

Its subcellular location is the secreted. Its function is as follows. Is able to inhibit all four classes of proteinases by a unique 'trapping' mechanism. This protein has a peptide stretch, called the 'bait region' which contains specific cleavage sites for different proteinases. When a proteinase cleaves the bait region, a conformational change is induced in the protein which traps the proteinase. The entrapped enzyme remains active against low molecular weight substrates (activity against high molecular weight substrates is greatly reduced). Following cleavage in the bait region a thioester bond is hydrolyzed and mediates the covalent binding of the protein to the proteinase. This is Alpha-2-macroglobulin-P from Mus musculus (Mouse).